A 530-amino-acid polypeptide reads, in one-letter code: Glucose-6-phosphate isomerase (530 aa).

Catalysis depends on glutamate 356, which acts as the Proton donor. Residues histidine 387 and lysine 502 contribute to the active site.

Belongs to the GPI family.

Its subcellular location is the cytoplasm. It catalyses the reaction alpha-D-glucose 6-phosphate = beta-D-fructose 6-phosphate. The protein operates within carbohydrate biosynthesis; gluconeogenesis. It participates in carbohydrate degradation; glycolysis; D-glyceraldehyde 3-phosphate and glycerone phosphate from D-glucose: step 2/4. In terms of biological role, catalyzes the reversible isomerization of glucose-6-phosphate to fructose-6-phosphate. The polypeptide is Glucose-6-phosphate isomerase (Borreliella burgdorferi (strain ATCC 35210 / DSM 4680 / CIP 102532 / B31) (Borrelia burgdorferi)).